Reading from the N-terminus, the 278-residue chain is Phage-like element PBSX protein XkdB (278 aa).

The segment at residues 58-80 is a DNA-binding region (H-T-H motif); it reads LKAREMAAVFGVSEKTVRRWLEL. Disordered stretches follow at residues 117-136 and 239-278; these read SLKERPFSPQTPDTNDRTDI and QHERMKKHDKTNNRTDFGRAEKRETSITGGQTGRIRRKQV. Residues 248–263 show a composition bias toward basic and acidic residues; that stretch reads KTNNRTDFGRAEKRET.

To B.subtilis YqaL.

This chain is Phage-like element PBSX protein XkdB (xkdB), found in Bacillus subtilis (strain 168).